A 397-amino-acid polypeptide reads, in one-letter code: MEPQEGKTRFHDFNLAPELMHAIQDLGFPYCTPIQAGVLGFTLKGKDAIGRAQTGTGKTAAFLISIIEQLTQTPPPAERYMGEPRALIIAPTRELVVQIAKDAADLTKYTNLNVMTFVGGMDFDKQLKQLEARHCDILVATPGRLLDFNQRGEVHLDMVEVMVLDEADRMLDMGFIPQVRQIIRQTPHKGERQTLLFSATFTEDVMNLAKQWTTDPSIVEIESLNVASDNVEQHIYAVAGADKYKLLYNLVTDNGWERVMVFANRKDEVRRIEERLVRDGVNAAQLSGDVPQHKRIKTLEGFREGKIRVLVATDVAGRGIHIDGISHVINFTLPEVPDDYVHRIGRTGRAGADGVSISFAGEDDSYQLPAIEEKLGRKISCETPPTHLLRAVVRQTN.

The Q motif motif lies at 8-36; that stretch reads TRFHDFNLAPELMHAIQDLGFPYCTPIQA. One can recognise a Helicase ATP-binding domain in the interval 39 to 219; sequence LGFTLKGKDA…KQWTTDPSIV (181 aa). 52–59 lines the ATP pocket; that stretch reads AQTGTGKT. The DEAD box signature appears at 165 to 168; it reads DEAD. Positions 242 to 392 constitute a Helicase C-terminal domain; that stretch reads DKYKLLYNLV…TPPTHLLRAV (151 aa).

The protein belongs to the DEAD box helicase family. RhlB subfamily. As to quaternary structure, component of the RNA degradosome, which is a multiprotein complex involved in RNA processing and mRNA degradation.

The protein resides in the cytoplasm. The catalysed reaction is ATP + H2O = ADP + phosphate + H(+). Functionally, DEAD-box RNA helicase involved in RNA degradation. Has RNA-dependent ATPase activity and unwinds double-stranded RNA. In Pseudomonas syringae pv. tomato (strain ATCC BAA-871 / DC3000), this protein is ATP-dependent RNA helicase RhlB.